The following is a 544-amino-acid chain: MNQSKKILRTVYLSLFLIGLFMLINDIFSSIMLSFKSSDKEVQFDLNKSFDDNEIFLSKSNGFDLINKSQNIVVETEIYFATFSTFRGNLVSLKLKNHLNLEKDPTDLINVDYKNETFFDVSLDYLVEDLFLYKKIDNLNHEFKAYFKNHGKIYEYVKKYTFSEKNEYLMKFTVIVNSLNDYDLFDIDSYKIVFSSEIERLSDKAKLQYNNYLSQIIYYDNKLKYGKDGLSINNPRWIGSSTKYFEVLISRENMEVEFKKERGVLKSFIVNNVGNKKNISDEFFIYAGPKDNRYLDIFDKSGDNTFGLSDIAFGMSVEKSLWYLIQVPMQMVMQVFYDVIPNWGLSIIFLTIVVRILIFPLTFKGFRATAELSKLQPKMKELQVKFKHDPKKLNEEMGRLYKEEGVNPLGGCFPVILQLPIFFALYSLVNNLFLLRGASFIPGWIDDLSIGDSVYNFGYRLYFVSWTDIRILPFIMMFTQLGSTIVSSNLDLKNLGAQQKFLYFGMPIMFFFILYNMPSGLLIYWITTNIFTILQQYYIKMHLS.

5 consecutive transmembrane segments (helical) span residues 15 to 35 (LFLI…MLSF), 321 to 341 (LWYL…DVIP), 343 to 363 (WGLS…PLTF), 409 to 429 (LGGC…YSLV), and 506 to 526 (MPIM…IYWI).

This sequence belongs to the OXA1/ALB3/YidC family. Type 1 subfamily. Interacts with the Sec translocase complex via SecD. Specifically interacts with transmembrane segments of nascent integral membrane proteins during membrane integration.

Its subcellular location is the cell inner membrane. In terms of biological role, required for the insertion and/or proper folding and/or complex formation of integral membrane proteins into the membrane. Involved in integration of membrane proteins that insert both dependently and independently of the Sec translocase complex, as well as at least some lipoproteins. Aids folding of multispanning membrane proteins. This chain is Membrane protein insertase YidC, found in Borrelia garinii subsp. bavariensis (strain ATCC BAA-2496 / DSM 23469 / PBi) (Borreliella bavariensis).